The following is a 320-amino-acid chain: Tetraacyldisaccharide 4'-kinase (320 aa).

53–60 (SVGGNGKT) contacts ATP.

It belongs to the LpxK family.

It carries out the reaction a lipid A disaccharide + ATP = a lipid IVA + ADP + H(+). It functions in the pathway glycolipid biosynthesis; lipid IV(A) biosynthesis; lipid IV(A) from (3R)-3-hydroxytetradecanoyl-[acyl-carrier-protein] and UDP-N-acetyl-alpha-D-glucosamine: step 6/6. In terms of biological role, transfers the gamma-phosphate of ATP to the 4'-position of a tetraacyldisaccharide 1-phosphate intermediate (termed DS-1-P) to form tetraacyldisaccharide 1,4'-bis-phosphate (lipid IVA). The chain is Tetraacyldisaccharide 4'-kinase from Psychromonas ingrahamii (strain DSM 17664 / CCUG 51855 / 37).